The sequence spans 165 residues: Protein SprT (165 aa).

One can recognise a SprT-like domain in the interval 20-163 (EKLAQANLKL…RCVHCGEQLV (144 aa)). Residue histidine 78 participates in Zn(2+) binding. Residue glutamate 79 is part of the active site. Histidine 82 is a binding site for Zn(2+).

Belongs to the SprT family. Requires Zn(2+) as cofactor.

Its subcellular location is the cytoplasm. The protein is Protein SprT of Escherichia coli (strain K12 / MC4100 / BW2952).